Consider the following 419-residue polypeptide: Interferon regulatory factor 3 (419 aa).

Thr-3 bears the Phosphothreonine mark. The segment at residues 5-111 (KPRILPWLVS…DPHKVYEFVT (107 aa)) is a DNA-binding region (IRF tryptophan pentad repeat). Position 14 is a phosphoserine (Ser-14). Thr-75 carries the post-translational modification Phosphothreonine. A phosphoserine mark is found at Ser-97, Ser-123, and Ser-135. A mediates interaction with ZDHHC11 region spans residues 140 to 419 (PKLFDGLILG…DMDFQATGNI (280 aa)). Residue Lys-188 forms a Glycyl lysine isopeptide (Lys-Gly) (interchain with G-Cter in ISG15) linkage. An interaction with HERC5 region spans residues 194-353 (EQWEFEVTAF…MWPQDQPWVK (160 aa)). A phosphothreonine mark is found at Thr-230, Thr-237, and Thr-246. Residues Lys-353 and Lys-359 each participate in a glycyl lysine isopeptide (Lys-Gly) (interchain with G-Cter in ISG15) cross-link. Position 359 is an N6-acetyllysine (Lys-359). Position 378 is a phosphoserine (Ser-378). At Ser-379 the chain carries Diphosphoserine. Phosphoserine; by TBK1 is present on Ser-379. At Ser-388 the chain carries Phosphoserine; by IKKE. Ser-390 is modified (phosphoserine). Phosphothreonine is present on Thr-396.

The protein belongs to the IRF family. In terms of assembly, monomer. Homodimer; phosphorylation-induced. Interacts (when phosphorylated) with CREBBP. Interacts with MAVS (via phosphorylated pLxIS motif). Interacts with TICAM1 (via phosphorylated pLxIS motif). Interacts with STING1 (via phosphorylated pLxIS motif). Interacts with IKBKE and TBK1. Interacts with TICAM2. Interacts with RBCK1. Interacts with HERC5. Interacts with DDX3X; the interaction allows the phosphorylation and activation of IRF3 by IKBKE. Interacts with TRIM21 and ULK1, in the presence of TRIM21; this interaction leads to IRF3 degradation by autophagy. Interacts with RIOK3; RIOK3 probably mediates the interaction of TBK1 with IRF3. Interacts with ILRUN; the interaction inhibits IRF3 binding to its DNA consensus sequence. Interacts with LYAR; this interaction impairs IRF3 DNA-binding activity. Interacts with TRAF3. Interacts with ZDHHC11; ZDHHC11 recruits IRF3 to STING1 upon DNA virus infection and thereby promotes IRF3 activation. Interacts with HSP90AA1; the interaction mediates IRF3 association with TOMM70. Interacts with BCL2; the interaction decreases upon Sendai virus infection. Interacts with BAX; the interaction is direct, increases upon virus infection and mediates the formation of the apoptosis complex TOMM70:HSP90AA1:IRF3:BAX. Interacts with DDX56. Interacts with NBR1. Constitutively phosphorylated on many Ser/Thr residues. Activated following phosphorylation by TBK1 and IKBKE. Innate adapter proteins, such as MAVS, STING1 or TICAM1, are first activated by viral RNA, cytosolic DNA, and bacterial lipopolysaccharide (LPS), respectively, leading to activation of the kinases TBK1 and IKBKE. These kinases then phosphorylate the adapter proteins on the pLxIS motif, leading to recruitment of IRF3, thereby licensing IRF3 for phosphorylation by TBK1. Phosphorylation at Ser-379 is followed by pyrophosphorylation at the same residue, promoting phosphorylation at Ser-388. Phosphorylated IRF3 dissociates from the adapter proteins, dimerizes, and then enters the nucleus to induce IFNs. In terms of processing, pyrophosphorylated by UAP1 following phosphorylation at Ser-379 by TBK1. Pyrophosphorylation promotes subsequent phosphorylation at Ser-388, leading to homodimerization of IRF3. Post-translationally, acetylation at Lys-359 by KAT8 inhibits recruimtent to promoters and transcription factor activity. Acetylation by KAT8 is promoted by phosphorylation at Ser-388. Ubiquitinated; ubiquitination involves RBCK1 leading to proteasomal degradation. Polyubiquitinated; ubiquitination involves TRIM21 leading to proteasomal degradation. Ubiquitinated by UBE3C, leading to its degradation. Deubiquitinated by USP5 on both 'Lys-48'-linked unanchored and 'Lys-63'-linked anchored polyubiquitin, leading to inhibition of anti-RNA viral innate immunity. In terms of processing, ISGylated by HERC5 resulting in sustained IRF3 activation and in the inhibition of IRF3 ubiquitination by disrupting PIN1 binding. The phosphorylation state of IRF3 does not alter ISGylation. Post-translationally, proteolytically cleaved by apoptotic caspases during apoptosis, leading to its inactivation. Cleavage by CASP3 during virus-induced apoptosis inactivates it, preventing cytokine overproduction.

It localises to the cytoplasm. The protein resides in the nucleus. The protein localises to the mitochondrion. With respect to regulation, in the absence of viral infection, maintained as a monomer in an autoinhibited state. Phosphorylation by TBK1 and IKBKE disrupts this autoinhibition leading to the liberation of the DNA-binding and dimerization activities and its nuclear localization where it can activate type I IFN and ISG genes. Phosphorylation and activation follow the following steps: innate adapter proteins, such as MAVS, STING1 or TICAM1, are first activated by viral RNA, cytosolic DNA and bacterial lipopolysaccharide (LPS), respectively, leading to activation of the kinases TBK1 and IKBKE. These kinases then phosphorylate the adapter proteins on their pLxIS motif, leading to recruitment of IRF3, thereby licensing IRF3 for phosphorylation by TBK1. Phosphorylated IRF3 dissociates from the adapter proteins, dimerizes, and then enters the nucleus to induce IFNs. Its function is as follows. Key transcriptional regulator of type I interferon (IFN)-dependent immune responses which plays a critical role in the innate immune response against DNA and RNA viruses. Regulates the transcription of type I IFN genes (IFN-alpha and IFN-beta) and IFN-stimulated genes (ISG) by binding to an interferon-stimulated response element (ISRE) in their promoters. Acts as a more potent activator of the IFN-beta (IFNB) gene than the IFN-alpha (IFNA) gene and plays a critical role in both the early and late phases of the IFNA/B gene induction. Found in an inactive form in the cytoplasm of uninfected cells and following viral infection, double-stranded RNA (dsRNA), or toll-like receptor (TLR) signaling, is phosphorylated by IKBKE and TBK1 kinases. This induces a conformational change, leading to its dimerization and nuclear localization and association with CREB binding protein (CREBBP) to form dsRNA-activated factor 1 (DRAF1), a complex which activates the transcription of the type I IFN and ISG genes. Can activate distinct gene expression programs in macrophages and can induce significant apoptosis in primary macrophages. The sequence is that of Interferon regulatory factor 3 (Irf3) from Mus musculus (Mouse).